We begin with the raw amino-acid sequence, 435 residues long: 3-phosphoshikimate 1-carboxyvinyltransferase (435 aa).

Positions 23, 24, and 28 each coordinate 3-phosphoshikimate. Lys-23 contributes to the phosphoenolpyruvate binding site. Phosphoenolpyruvate contacts are provided by Gly-97 and Arg-125. Ser-170, Ser-171, Gln-172, Ser-198, Asp-314, Asn-338, and Lys-342 together coordinate 3-phosphoshikimate. Gln-172 is a binding site for phosphoenolpyruvate. Asp-314 functions as the Proton acceptor in the catalytic mechanism. Phosphoenolpyruvate is bound by residues Arg-346, Arg-388, and Lys-413.

Belongs to the EPSP synthase family. Monomer.

It is found in the cytoplasm. The catalysed reaction is 3-phosphoshikimate + phosphoenolpyruvate = 5-O-(1-carboxyvinyl)-3-phosphoshikimate + phosphate. The protein operates within metabolic intermediate biosynthesis; chorismate biosynthesis; chorismate from D-erythrose 4-phosphate and phosphoenolpyruvate: step 6/7. Catalyzes the transfer of the enolpyruvyl moiety of phosphoenolpyruvate (PEP) to the 5-hydroxyl of shikimate-3-phosphate (S3P) to produce enolpyruvyl shikimate-3-phosphate and inorganic phosphate. In Sodalis glossinidius (strain morsitans), this protein is 3-phosphoshikimate 1-carboxyvinyltransferase.